Reading from the N-terminus, the 369-residue chain is Beta-1,3-galactosyltransferase 9 (369 aa).

At 1–12 (MQVTFCRLRTHQ) the chain is on the cytoplasmic side. A helical; Signal-anchor for type II membrane protein transmembrane segment spans residues 13–33 (WCFILFNVILFHALLFGTDFV). Residues 34 to 369 (EEYFLHSLPY…IKNNLMYFAD (336 aa)) lie on the Lumenal side of the membrane. Residues N66, N96, and N109 are each glycosylated (N-linked (GlcNAc...) asparagine).

The protein belongs to the glycosyltransferase 31 family.

Its subcellular location is the golgi apparatus membrane. Putative glycosyltransferase that could catalyze the transfer of galactose residues from UDP-alpha-D-galactose. The chain is Beta-1,3-galactosyltransferase 9 from Homo sapiens (Human).